Consider the following 260-residue polypeptide: Dehydrogenase/reductase SDR family member 11 (260 aa).

The N-terminal stretch at 1–30 (MTRAGMERWRDRLALVTGASGGIGAAVARA) is a signal peptide. Residues 18–23 (GASGGI), 43–44 (RT), Glu-49, 70–71 (DL), and Asn-97 contribute to the NADP(+) site. 2 residues coordinate substrate: Ser-151 and Tyr-166. NADP(+) is bound by residues Tyr-166, Lys-170, 201–204 (VETQ), and Lys-208. The active-site Proton acceptor is the Tyr-166.

This sequence belongs to the short-chain dehydrogenases/reductases (SDR) family. In terms of assembly, homotetramer.

It is found in the secreted. The enzyme catalyses a 3beta-hydroxysteroid + NADP(+) = a 3-oxosteroid + NADPH + H(+). It carries out the reaction 17beta-estradiol + NAD(+) = estrone + NADH + H(+). The catalysed reaction is 17beta-estradiol + NADP(+) = estrone + NADPH + H(+). It participates in steroid biosynthesis; estrogen biosynthesis. Its activity is regulated as follows. Inhibited by flavonoids including apigenin, luteolin, genistein, kaempferol and quercetin and also by carbenoxolone, zearalenone, glycyrrhetinic, curcumin and flufenamic acid. Functionally, catalyzes the conversion of the 17-keto group of estrone, 4- and 5-androstenes and 5-alpha-androstanes into their 17-beta-hydroxyl metabolites and the conversion of the 3-keto group of 3-, 3,17- and 3,20- diketosteroids into their 3-hydroxyl metabolites. Exhibits reductive 3-beta-hydroxysteroid dehydrogenase activity toward 5-beta-androstanes, 5-beta-pregnanes, 4-pregnenes and bile acids. May also reduce endogenous and exogenous alpha-dicarbonyl compounds and xenobiotic alicyclic ketones. This is Dehydrogenase/reductase SDR family member 11 (Dhrs11) from Mus musculus (Mouse).